The following is a 308-amino-acid chain: Protein Bel-1 (308 aa).

The DNA-binding element occupies 94–203; it reads SKSTCKRLIL…KGTRLPKRRC (110 aa). Residues 200 to 242 are disordered; the sequence is KRRCNPSRRYETFREHPPTRKRRSKEGIPTDQQPSTSNGDPMA. Residues 207-217 are compositionally biased toward basic and acidic residues; it reads RRYETFREHPP. A Nuclear localization signal motif is present at residues 217–226; that stretch reads PTRKRRSKEG. The tract at residues 228–304 is transactivation domain; that stretch reads PTDQQPSTSN…PLGSSEDQLL (77 aa). Positions 229-238 are enriched in polar residues; that stretch reads TDQQPSTSNG.

Homodimer or homomultimer. Forms complexes with the host nuclear factors NFIA, NFIB, NFIC or NFIX.

The protein resides in the host nucleus. Its function is as follows. Transcriptional transactivator that activates the viral internal promoter (IP), thereby enhancing its own expression. This transactivation is repressed by nuclear factor I. Also transactivates the long terminal repeat (LTR) promoter, thereby inducing structural gene expression, initiating the late phase of infection. It is therefore a key regulator of viral gene expression. It directly binds to and activates DNA target sites of viral promoters and those of distinct cellular genes. Required for viral replication. The chain is Protein Bel-1 (bel1) from Simian foamy virus type 1 (SFVmac).